Here is a 494-residue protein sequence, read N- to C-terminus: Glutamyl-tRNA(Gln) amidotransferase subunit A (494 aa).

Active-site charge relay system residues include K80 and S160. Residues 140 to 168 (GNVISPWRRPGDTAPLAPGGSSGGSSSAV) are disordered. S184 (acyl-ester intermediate) is an active-site residue.

This sequence belongs to the amidase family. GatA subfamily. In terms of assembly, heterotrimer of A, B and C subunits.

The catalysed reaction is L-glutamyl-tRNA(Gln) + L-glutamine + ATP + H2O = L-glutaminyl-tRNA(Gln) + L-glutamate + ADP + phosphate + H(+). Its function is as follows. Allows the formation of correctly charged Gln-tRNA(Gln) through the transamidation of misacylated Glu-tRNA(Gln) in organisms which lack glutaminyl-tRNA synthetase. The reaction takes place in the presence of glutamine and ATP through an activated gamma-phospho-Glu-tRNA(Gln). This chain is Glutamyl-tRNA(Gln) amidotransferase subunit A, found in Novosphingobium aromaticivorans (strain ATCC 700278 / DSM 12444 / CCUG 56034 / CIP 105152 / NBRC 16084 / F199).